The primary structure comprises 343 residues: Protein RecA (343 aa).

65 to 72 contributes to the ATP binding site; that stretch reads GPESSGKT.

This sequence belongs to the RecA family.

It is found in the cytoplasm. In terms of biological role, can catalyze the hydrolysis of ATP in the presence of single-stranded DNA, the ATP-dependent uptake of single-stranded DNA by duplex DNA, and the ATP-dependent hybridization of homologous single-stranded DNAs. It interacts with LexA causing its activation and leading to its autocatalytic cleavage. The sequence is that of Protein RecA from Campylobacter jejuni subsp. jejuni serotype O:6 (strain 81116 / NCTC 11828).